Here is a 203-residue protein sequence, read N- to C-terminus: Probable chemoreceptor glutamine deamidase CheD (203 aa).

This sequence belongs to the CheD family.

The enzyme catalyses L-glutaminyl-[protein] + H2O = L-glutamyl-[protein] + NH4(+). Its function is as follows. Probably deamidates glutamine residues to glutamate on methyl-accepting chemotaxis receptors (MCPs), playing an important role in chemotaxis. The protein is Probable chemoreceptor glutamine deamidase CheD of Herminiimonas arsenicoxydans.